Consider the following 195-residue polypeptide: Endoribonuclease YbeY (195 aa).

H152, H156, and H162 together coordinate Zn(2+).

It belongs to the endoribonuclease YbeY family. Zn(2+) serves as cofactor.

It is found in the cytoplasm. In terms of biological role, single strand-specific metallo-endoribonuclease involved in late-stage 70S ribosome quality control and in maturation of the 3' terminus of the 16S rRNA. This chain is Endoribonuclease YbeY, found in Rhodopseudomonas palustris (strain BisB5).